The primary structure comprises 366 residues: D-alanine--D-alanine ligase (366 aa).

The region spanning 150 to 353 is the ATP-grasp domain; sequence KRVLRDAGVP…YPALVDRLIV (204 aa). Position 180–235 (180–235) interacts with ATP; the sequence is IGQLGLPLFIKPASQGSSVGVSKVTDRAGFAAALALAFRYDAKVLVEQGISGREIE. Residues D307, E320, and N322 each contribute to the Mg(2+) site.

This sequence belongs to the D-alanine--D-alanine ligase family. Requires Mg(2+) as cofactor. Mn(2+) serves as cofactor.

It is found in the cytoplasm. The enzyme catalyses 2 D-alanine + ATP = D-alanyl-D-alanine + ADP + phosphate + H(+). Its pathway is cell wall biogenesis; peptidoglycan biosynthesis. In terms of biological role, cell wall formation. The chain is D-alanine--D-alanine ligase from Sodalis glossinidius (strain morsitans).